The chain runs to 457 residues: NADH-quinone oxidoreductase subunit N (457 aa).

14 consecutive transmembrane segments (helical) span residues 2–22 (NAIILISVLGILSMMSEFIGL), 25–45 (LIYPIILISLIGILGYNACTF), 60–80 (NYSVAFGSLLITITLFWFILF), 92–112 (GDHYALILFSTVGGLVLVSFS), 114–134 (MSMLFLGVEILSIPLYILAGS), 149–169 (FILGSFATGIMLLGIALIYGA), 188–208 (FFIGITLLSIAFAFKVSAVPF), 222–242 (FITAFMSTFVKVAAFGAFYLM), 253–273 (YLSHTLIGLSALTIVVGNIAA), 283–303 (LAFSGVSQAGYMLMVFPILTI), 310–330 (FVYLAGYAIANLIAIYIVQVV), 353–373 (AFVLSLSLISLAGIPPAAGFF), 382–402 (VIHAGNIYLVLIAILGSLISV), and 431–451 (VILAIMSALVVLIGLFPDILL).

It belongs to the complex I subunit 2 family. As to quaternary structure, NDH-1 is composed of 14 different subunits. Subunits NuoA, H, J, K, L, M, N constitute the membrane sector of the complex.

The protein resides in the cell inner membrane. It catalyses the reaction a quinone + NADH + 5 H(+)(in) = a quinol + NAD(+) + 4 H(+)(out). Functionally, NDH-1 shuttles electrons from NADH, via FMN and iron-sulfur (Fe-S) centers, to quinones in the respiratory chain. The immediate electron acceptor for the enzyme in this species is believed to be a menaquinone. Couples the redox reaction to proton translocation (for every two electrons transferred, four hydrogen ions are translocated across the cytoplasmic membrane), and thus conserves the redox energy in a proton gradient. This is NADH-quinone oxidoreductase subunit N from Cytophaga hutchinsonii (strain ATCC 33406 / DSM 1761 / CIP 103989 / NBRC 15051 / NCIMB 9469 / D465).